Reading from the N-terminus, the 212-residue chain is MQLFHLCLIISCSCPTVQASKLCLGWLLGMDIDPYKEFGATVELLSFLPSDFFPSVRDLLDTASALYREALESPEHCSPNHTALRQAILCWGELMTLASWVGNNLEDPASREQVVNYVNTNMGLKIRQLLWFHISCLTFGRETVLEYLVSFGVWIRTPPAYRPPNAPILSTLPETAVVRRRGRSPRRRTPSPRRRRSQSPRRRRSQSPASQC.

An N-terminal signal peptide occupies residues 1-19 (MQLFHLCLIISCSCPTVQA). Positions 25–27 (GWL) are HBEAG. Positions 172-212 (LPETAVVRRRGRSPRRRTPSPRRRRSQSPRRRRSQSPASQC) are disordered. A compositionally biased stretch (basic residues) spans 178 to 205 (VRRRGRSPRRRTPSPRRRRSQSPRRRRS). One copy of the 1; half-length repeat lies at 184–190 (SPRRRTP). Residues 184–206 (SPRRRTPSPRRRRSQSPRRRRSQ) are 3 X 8 AA repeats of S-P-R-R-R-R-S-Q. Positions 184-212 (SPRRRTPSPRRRRSQSPRRRRSQSPASQC) are excised as a propeptide. 2 repeat units span residues 191–198 (SPRRRRSQ) and 199–206 (SPRRRRSQ).

The protein belongs to the orthohepadnavirus precore antigen family. Homodimerizes. In terms of processing, phosphorylated. Post-translationally, cleaved by host furin.

The protein localises to the secreted. It localises to the host nucleus. Functionally, may regulate immune response to the intracellular capsid in acting as a T-cell tolerogen, by having an immunoregulatory effect which prevents destruction of infected cells by cytotoxic T-cells. This immune regulation may predispose to chronicity during perinatal infections and prevent severe liver injury during adult infections. The sequence is that of External core antigen from Gorilla gorilla (western gorilla).